Consider the following 331-residue polypeptide: Putative sigma L-dependent transcriptional regulator YplP (331 aa).

In terms of domain architecture, Sigma-54 factor interaction spans 12 to 213 (HLIGEHQTFL…LKNAADYMAA (202 aa)). Residue 95–104 (AVRGTLFLDD) participates in ATP binding.

May play a role in cold adaptation. This chain is Putative sigma L-dependent transcriptional regulator YplP (yplP), found in Bacillus subtilis (strain 168).